We begin with the raw amino-acid sequence, 249 residues long: 2,3-bisphosphoglycerate-dependent phosphoglycerate mutase (249 aa).

Residues 11–18 (RHGESDWN), 24–25 (TG), R63, 90–93 (ERHY), K101, 117–118 (RR), and 184–185 (GN) contribute to the substrate site. H12 serves as the catalytic Tele-phosphohistidine intermediate. Catalysis depends on E90, which acts as the Proton donor/acceptor.

This sequence belongs to the phosphoglycerate mutase family. BPG-dependent PGAM subfamily.

The catalysed reaction is (2R)-2-phosphoglycerate = (2R)-3-phosphoglycerate. Its pathway is carbohydrate degradation; glycolysis; pyruvate from D-glyceraldehyde 3-phosphate: step 3/5. Functionally, catalyzes the interconversion of 2-phosphoglycerate and 3-phosphoglycerate. The protein is 2,3-bisphosphoglycerate-dependent phosphoglycerate mutase of Mycobacterium bovis (strain BCG / Pasteur 1173P2).